Reading from the N-terminus, the 195-residue chain is Holliday junction branch migration complex subunit RuvA (195 aa).

The tract at residues Met-1 to Ala-63 is domain I. Positions Asp-64–Gly-138 are domain II. The interval Gly-138–Ala-142 is flexible linker. The tract at residues Gly-143–Lys-195 is domain III.

The protein belongs to the RuvA family. As to quaternary structure, homotetramer. Forms an RuvA(8)-RuvB(12)-Holliday junction (HJ) complex. HJ DNA is sandwiched between 2 RuvA tetramers; dsDNA enters through RuvA and exits via RuvB. An RuvB hexamer assembles on each DNA strand where it exits the tetramer. Each RuvB hexamer is contacted by two RuvA subunits (via domain III) on 2 adjacent RuvB subunits; this complex drives branch migration. In the full resolvosome a probable DNA-RuvA(4)-RuvB(12)-RuvC(2) complex forms which resolves the HJ.

It is found in the cytoplasm. The RuvA-RuvB-RuvC complex processes Holliday junction (HJ) DNA during genetic recombination and DNA repair, while the RuvA-RuvB complex plays an important role in the rescue of blocked DNA replication forks via replication fork reversal (RFR). RuvA specifically binds to HJ cruciform DNA, conferring on it an open structure. The RuvB hexamer acts as an ATP-dependent pump, pulling dsDNA into and through the RuvAB complex. HJ branch migration allows RuvC to scan DNA until it finds its consensus sequence, where it cleaves and resolves the cruciform DNA. The protein is Holliday junction branch migration complex subunit RuvA of Mycolicibacterium gilvum (strain PYR-GCK) (Mycobacterium gilvum (strain PYR-GCK)).